A 662-amino-acid chain; its full sequence is ATP-dependent zinc metalloprotease YME1 homolog (662 aa).

Residue glycine 206–threonine 213 participates in ATP binding. Zn(2+) is bound at residue histidine 425. Residue glutamate 426 is part of the active site. Residues histidine 429 and aspartate 503 each contribute to the Zn(2+) site.

It in the N-terminal section; belongs to the AAA ATPase family. In the C-terminal section; belongs to the peptidase M41 family. Zn(2+) serves as cofactor.

Its function is as follows. Putative ATP-dependent protease. In Schistosoma mansoni (Blood fluke), this protein is ATP-dependent zinc metalloprotease YME1 homolog.